The following is a 263-amino-acid chain: Follistatin-related protein 3 (263 aa).

A signal peptide spans 1–26; that stretch reads MRPGAPGPLWPLPWGALAWAVGFVSS. Positions 36 to 107 constitute a TB domain; that stretch reads GVCWLQQGQE…SCDGVECGPG (72 aa). Intrachain disulfides connect C38-C61, C48-C92, C62-C95, C99-C110, C104-C119, C121-C153, C125-C146, C135-C167, C171-C182, C176-C192, C195-C229, C200-C222, and C211-C243. N73 carries an N-linked (GlcNAc...) asparagine glycan. The 21-residue stretch at 99 to 119 folds into the Follistatin-like 1 domain; it reads CDGVECGPGKACRMLGGRPRC. The 57-residue stretch at 113 to 169 folds into the Kazal-like 1 domain; sequence LGGRPRCECAPDCSGLPARLQVCGSDGATYRDECELRAARCRGHPDLSVMYRGRCRK. A Follistatin-like 2 domain is found at 170–193; it reads SCEHVVCPRPQSCVVDQTGSAHCV. A Kazal-like 2 domain is found at 189–245; the sequence is SAHCVVCRAAPCPVPSSPGQELCGNNNVTYISSCHMRQATCFLGRSIGVRHAGSCAG. N-linked (GlcNAc...) asparagine glycosylation occurs at N215. Residues 242 to 263 are disordered; it reads SCAGTPEEPPGGESAEEEENFV. At S255 the chain carries Phosphoserine; by FAM20C.

Interacts with INHBA and INHBB. Interacts with FN1. Interacts with ADAM12. Isoform 2 interacts with MLLT10; the interaction enhances MLLT10 in vitro transcriptional activity and self-association. Interacts with MSTN. In terms of tissue distribution, expressed in a wide range of tissues.

It is found in the secreted. The protein resides in the nucleus. In terms of biological role, isoform 1 or the secreted form is a binding and antagonizing protein for members of the TGF-beta family, such as activin, BMP2 and MSTN. Inhibits activin A-, activin B-, BMP2- and MSDT-induced cellular signaling; more effective on activin A than on activin B. Involved in bone formation; inhibits osteoclast differentiation. Involved in hematopoiesis; involved in differentiation of hemopoietic progenitor cells, increases hematopoietic cell adhesion to fibronectin and seems to contribute to the adhesion of hematopoietic precursor cells to the bone marrow stroma. Isoform 2 or the nuclear form is probably involved in transcriptional regulation via interaction with MLLT10. The protein is Follistatin-related protein 3 (FSTL3) of Homo sapiens (Human).